A 291-amino-acid polypeptide reads, in one-letter code: Ribosome biogenesis protein BRX1 (291 aa).

One can recognise a Brix domain in the interval 31-232; sequence QRTLLISSRG…VILILEGSFG (202 aa). A Phosphoserine modification is found at S285.

Belongs to the BRX1 family. As to quaternary structure, part of a complex that includes BRX1, RPF1, RPF2 and SSF1 or SSF2.

The protein localises to the nucleus. Its subcellular location is the nucleolus. In terms of biological role, required for biogenesis of the 60S ribosomal subunit. This chain is Ribosome biogenesis protein BRX1 (BRX1), found in Saccharomyces cerevisiae (strain ATCC 204508 / S288c) (Baker's yeast).